The following is a 377-amino-acid chain: LIM/homeobox protein Lhx9 (377 aa).

LIM zinc-binding domains are found at residues 50–111 (ALCA…RFSV) and 112–174 (QRCA…LVQG). Disordered stretches follow at residues 228-249 (NEND…QKTK), 309-346 (RQEN…TDLT), and 358-377 (SSLD…TNLF). Residues 248 to 307 (TKXMRTSFKHHQLRTMKSYFAINHNPDAKDLKQLAQKTGLTKRVLQVWFQNARAKFRRNV) constitute a DNA-binding region (homeobox). Low complexity predominate over residues 333–346 (LTPPSTATTLTDLT). Positions 365–377 (SGSPPQTTLTNLF) are enriched in polar residues.

Its subcellular location is the nucleus. Its function is as follows. May be involved in gonadal development. The sequence is that of LIM/homeobox protein Lhx9 (lhx9) from Psalidodon fasciatus (Banded astyanax).